Reading from the N-terminus, the 87-residue chain is CRISPR-associated endoribonuclease Cas2 (87 aa).

Residue aspartate 8 coordinates Mg(2+).

It belongs to the CRISPR-associated endoribonuclease Cas2 protein family. As to quaternary structure, homodimer, forms a heterotetramer with a Cas1 homodimer. The cofactor is Mg(2+).

Its function is as follows. CRISPR (clustered regularly interspaced short palindromic repeat), is an adaptive immune system that provides protection against mobile genetic elements (viruses, transposable elements and conjugative plasmids). CRISPR clusters contain sequences complementary to antecedent mobile elements and target invading nucleic acids. CRISPR clusters are transcribed and processed into CRISPR RNA (crRNA). Functions as a ssRNA-specific endoribonuclease. Involved in the integration of spacer DNA into the CRISPR cassette. The chain is CRISPR-associated endoribonuclease Cas2 from Dictyoglomus turgidum (strain DSM 6724 / Z-1310).